Reading from the N-terminus, the 131-residue chain is Glycine cleavage system H protein (131 aa).

Residues 24–106 (RAIVGISDHA…YGEGWIMVIE (83 aa)) form the Lipoyl-binding domain. Lysine 65 bears the N6-lipoyllysine mark.

The protein belongs to the GcvH family. The glycine cleavage system is composed of four proteins: P, T, L and H. (R)-lipoate serves as cofactor.

Its function is as follows. The glycine cleavage system catalyzes the degradation of glycine. The H protein shuttles the methylamine group of glycine from the P protein to the T protein. The chain is Glycine cleavage system H protein from Xylella fastidiosa (strain 9a5c).